Reading from the N-terminus, the 213-residue chain is Kynurenine formamidase (213 aa).

Trp18 is a binding site for substrate. Residues His48, His52, and Asp54 each contribute to the Zn(2+) site. Residue His58 is the Proton donor/acceptor of the active site. The Zn(2+) site is built by His160 and Glu172.

It belongs to the Cyclase 1 superfamily. KynB family. Homodimer. Zn(2+) serves as cofactor.

It carries out the reaction N-formyl-L-kynurenine + H2O = L-kynurenine + formate + H(+). Its pathway is amino-acid degradation; L-tryptophan degradation via kynurenine pathway; L-kynurenine from L-tryptophan: step 2/2. Functionally, catalyzes the hydrolysis of N-formyl-L-kynurenine to L-kynurenine, the second step in the kynurenine pathway of tryptophan degradation. The sequence is that of Kynurenine formamidase from Burkholderia cenocepacia (strain ATCC BAA-245 / DSM 16553 / LMG 16656 / NCTC 13227 / J2315 / CF5610) (Burkholderia cepacia (strain J2315)).